The sequence spans 263 residues: Oxidoreductase UcpA (263 aa).

10–32 (LITGALQGIGEGIARTFARHGAN) is an NAD(+) binding site. Position 141 (S141) interacts with substrate. Residue Y155 is the Proton acceptor of the active site.

Belongs to the short-chain dehydrogenases/reductases (SDR) family.

The protein is Oxidoreductase UcpA (ucpA) of Escherichia coli O157:H7.